Consider the following 1774-residue polypeptide: U3 small nucleolar RNA-associated protein 10 (1774 aa).

The interval 1206–1226 (YDKHSSAGSNDEEAGSESEAE) is disordered. Residues 1215–1226 (NDEEAGSESEAE) are compositionally biased toward acidic residues. The HEAT repeat unit spans residues 1734–1772 (LVPIIAELLEDEDEEVEYEVRSGLVKVVESVMGEPFDRY).

This sequence belongs to the HEATR1/UTP10 family. Component of the ribosomal small subunit (SSU) processome.

Its subcellular location is the nucleus. It is found in the nucleolus. Involved in nucleolar processing of pre-18S ribosomal RNA. Involved in ribosome biosynthesis. This Kluyveromyces lactis (strain ATCC 8585 / CBS 2359 / DSM 70799 / NBRC 1267 / NRRL Y-1140 / WM37) (Yeast) protein is U3 small nucleolar RNA-associated protein 10.